A 410-amino-acid chain; its full sequence is Cysteine desulfurase (410 aa).

Lysine 227 carries the N6-(pyridoxal phosphate)lysine modification. Cysteine 365 serves as the catalytic Cysteine persulfide intermediate.

The protein belongs to the class-V pyridoxal-phosphate-dependent aminotransferase family. Csd subfamily. In terms of assembly, homodimer. Interacts with SufE and the SufBCD complex composed of SufB, SufC and SufD. The interaction with SufE is required to mediate the direct transfer of the sulfur atom from the S-sulfanylcysteine. Requires pyridoxal 5'-phosphate as cofactor.

It is found in the cytoplasm. It catalyses the reaction (sulfur carrier)-H + L-cysteine = (sulfur carrier)-SH + L-alanine. It carries out the reaction L-selenocysteine + AH2 = hydrogenselenide + L-alanine + A + H(+). The protein operates within cofactor biosynthesis; iron-sulfur cluster biosynthesis. In terms of biological role, cysteine desulfurases mobilize the sulfur from L-cysteine to yield L-alanine, an essential step in sulfur metabolism for biosynthesis of a variety of sulfur-containing biomolecules. Component of the suf operon, which is activated and required under specific conditions such as oxidative stress and iron limitation. Acts as a potent selenocysteine lyase in vitro, that mobilizes selenium from L-selenocysteine. Selenocysteine lyase activity is however unsure in vivo. In Wigglesworthia glossinidia brevipalpis, this protein is Cysteine desulfurase.